The following is a 103-amino-acid chain: Small ribosomal subunit protein uS10 (103 aa).

The protein belongs to the universal ribosomal protein uS10 family. As to quaternary structure, part of the 30S ribosomal subunit.

Its function is as follows. Involved in the binding of tRNA to the ribosomes. This Ralstonia pickettii (strain 12J) protein is Small ribosomal subunit protein uS10.